The primary structure comprises 283 residues: Elongation factor Ts (283 aa).

Residues 80-83 (TDFV) form an involved in Mg(2+) ion dislocation from EF-Tu region.

It belongs to the EF-Ts family.

It localises to the cytoplasm. Its function is as follows. Associates with the EF-Tu.GDP complex and induces the exchange of GDP to GTP. It remains bound to the aminoacyl-tRNA.EF-Tu.GTP complex up to the GTP hydrolysis stage on the ribosome. This is Elongation factor Ts from Haemophilus influenzae (strain PittGG).